Here is a 142-residue protein sequence, read N- to C-terminus: Large ribosomal subunit protein uL13 (142 aa).

The protein belongs to the universal ribosomal protein uL13 family. As to quaternary structure, part of the 50S ribosomal subunit.

This protein is one of the early assembly proteins of the 50S ribosomal subunit, although it is not seen to bind rRNA by itself. It is important during the early stages of 50S assembly. The chain is Large ribosomal subunit protein uL13 from Aromatoleum aromaticum (strain DSM 19018 / LMG 30748 / EbN1) (Azoarcus sp. (strain EbN1)).